The chain runs to 99 residues: Aspartyl/glutamyl-tRNA(Asn/Gln) amidotransferase subunit C (99 aa).

Belongs to the GatC family. As to quaternary structure, heterotrimer of A, B and C subunits.

It carries out the reaction L-glutamyl-tRNA(Gln) + L-glutamine + ATP + H2O = L-glutaminyl-tRNA(Gln) + L-glutamate + ADP + phosphate + H(+). It catalyses the reaction L-aspartyl-tRNA(Asn) + L-glutamine + ATP + H2O = L-asparaginyl-tRNA(Asn) + L-glutamate + ADP + phosphate + 2 H(+). Its function is as follows. Allows the formation of correctly charged Asn-tRNA(Asn) or Gln-tRNA(Gln) through the transamidation of misacylated Asp-tRNA(Asn) or Glu-tRNA(Gln) in organisms which lack either or both of asparaginyl-tRNA or glutaminyl-tRNA synthetases. The reaction takes place in the presence of glutamine and ATP through an activated phospho-Asp-tRNA(Asn) or phospho-Glu-tRNA(Gln). The polypeptide is Aspartyl/glutamyl-tRNA(Asn/Gln) amidotransferase subunit C (Paracidovorax citrulli (strain AAC00-1) (Acidovorax citrulli)).